Reading from the N-terminus, the 85-residue chain is uncharacterized protein (85 aa).

It belongs to the YciI family.

This is an uncharacterized protein from Bacillus subtilis (strain 168).